Reading from the N-terminus, the 225-residue chain is Uracil-DNA glycosylase (225 aa).

The Proton acceptor role is filled by Asp-65.

This sequence belongs to the uracil-DNA glycosylase (UDG) superfamily. UNG family.

It is found in the cytoplasm. It catalyses the reaction Hydrolyzes single-stranded DNA or mismatched double-stranded DNA and polynucleotides, releasing free uracil.. Functionally, excises uracil residues from the DNA which can arise as a result of misincorporation of dUMP residues by DNA polymerase or due to deamination of cytosine. The chain is Uracil-DNA glycosylase from Bacillus thuringiensis subsp. konkukian (strain 97-27).